We begin with the raw amino-acid sequence, 279 residues long: 4-hydroxy-3-methylbut-2-enyl diphosphate reductase (279 aa).

Position 12 (Cys12) interacts with [4Fe-4S] cluster. (2E)-4-hydroxy-3-methylbut-2-enyl diphosphate contacts are provided by His36 and His70. Positions 36 and 70 each coordinate dimethylallyl diphosphate. Isopentenyl diphosphate is bound by residues His36 and His70. [4Fe-4S] cluster is bound at residue Cys92. His120 provides a ligand contact to (2E)-4-hydroxy-3-methylbut-2-enyl diphosphate. A dimethylallyl diphosphate-binding site is contributed by His120. His120 is a binding site for isopentenyl diphosphate. Glu122 functions as the Proton donor in the catalytic mechanism. Thr158 is a (2E)-4-hydroxy-3-methylbut-2-enyl diphosphate binding site. Cys186 contributes to the [4Fe-4S] cluster binding site. The (2E)-4-hydroxy-3-methylbut-2-enyl diphosphate site is built by Ser214, Ser215, Asn216, and Ser258. Positions 214, 215, 216, and 258 each coordinate dimethylallyl diphosphate. Ser214, Ser215, Asn216, and Ser258 together coordinate isopentenyl diphosphate.

Belongs to the IspH family. The cofactor is [4Fe-4S] cluster.

The enzyme catalyses isopentenyl diphosphate + 2 oxidized [2Fe-2S]-[ferredoxin] + H2O = (2E)-4-hydroxy-3-methylbut-2-enyl diphosphate + 2 reduced [2Fe-2S]-[ferredoxin] + 2 H(+). The catalysed reaction is dimethylallyl diphosphate + 2 oxidized [2Fe-2S]-[ferredoxin] + H2O = (2E)-4-hydroxy-3-methylbut-2-enyl diphosphate + 2 reduced [2Fe-2S]-[ferredoxin] + 2 H(+). The protein operates within isoprenoid biosynthesis; dimethylallyl diphosphate biosynthesis; dimethylallyl diphosphate from (2E)-4-hydroxy-3-methylbutenyl diphosphate: step 1/1. It participates in isoprenoid biosynthesis; isopentenyl diphosphate biosynthesis via DXP pathway; isopentenyl diphosphate from 1-deoxy-D-xylulose 5-phosphate: step 6/6. Functionally, catalyzes the conversion of 1-hydroxy-2-methyl-2-(E)-butenyl 4-diphosphate (HMBPP) into a mixture of isopentenyl diphosphate (IPP) and dimethylallyl diphosphate (DMAPP). Acts in the terminal step of the DOXP/MEP pathway for isoprenoid precursor biosynthesis. In Campylobacter fetus subsp. fetus (strain 82-40), this protein is 4-hydroxy-3-methylbut-2-enyl diphosphate reductase.